A 533-amino-acid chain; its full sequence is Chromosomal replication initiator protein DnaA (533 aa).

Residues 1–72 are domain I, interacts with DnaA modulators; sequence MNDFWQHCSA…DLARDFWNAP (72 aa). Residues 72–196 form a domain II region; it reads PIEVQFVLDP…EAADSMYERS (125 aa). Residues 83-113 are disordered; it reads AGQRSPAGATPLAPRAPLPSANPAPVAPGPA. Positions 96–110 are enriched in pro residues; sequence PRAPLPSANPAPVAP. Residues 197-413 form a domain III, AAA+ region region; it reads KLNPVLTFDN…GALRKILAYS (217 aa). The ATP site is built by glycine 241, glycine 243, lysine 244, and threonine 245. Residues 414-533 are domain IV, binds dsDNA; that stretch reads KFHGREITIE…LHVLEQTLKG (120 aa).

The protein belongs to the DnaA family. In terms of assembly, oligomerizes as a right-handed, spiral filament on DNA at oriC.

The protein localises to the cytoplasm. Functionally, plays an essential role in the initiation and regulation of chromosomal replication. ATP-DnaA binds to the origin of replication (oriC) to initiate formation of the DNA replication initiation complex once per cell cycle. Binds the DnaA box (a 9 base pair repeat at the origin) and separates the double-stranded (ds)DNA. Forms a right-handed helical filament on oriC DNA; dsDNA binds to the exterior of the filament while single-stranded (ss)DNA is stabiized in the filament's interior. The ATP-DnaA-oriC complex binds and stabilizes one strand of the AT-rich DNA unwinding element (DUE), permitting loading of DNA polymerase. After initiation quickly degrades to an ADP-DnaA complex that is not apt for DNA replication. Binds acidic phospholipids. The polypeptide is Chromosomal replication initiator protein DnaA (Burkholderia mallei (strain SAVP1)).